Consider the following 230-residue polypeptide: Preflagellin peptidase (230 aa).

Met1 is a topological domain (cytoplasmic). Residues 2 to 18 (IEYIIGALGLIIASVQD) traverse the membrane as a helical segment. At 19-23 (FRSRE) the chain is on the extracellular side. The chain crosses the membrane as a helical span at residues 24–46 (IEDYIWIFLAVFGVLFAIYSSIT). Residues 47 to 49 (LLD) are Cytoplasmic-facing. The helical transmembrane segment at 50-72 (YSILINSISGFVICFILGYMMFL) threads the bilayer. The Extracellular segment spans residues 73–78 (SGIGGG). The chain crosses the membrane as a helical span at residues 79 to 89 (DGKMLIGLGAL). At 90–110 (VPKFQMPIYTSLGTLLNLNYV) the chain is on the cytoplasmic side. The helical transmembrane segment at 111 to 139 (PTFPIMVFINGIFFMVFLPFVILFRNILN) threads the bilayer. At 140–204 (GARPKTGKEF…EEIWVTPQIP (65 aa)) the chain is on the extracellular side. A helical membrane pass occupies residues 205–216 (LIIPITLSYLVT). The Cytoplasmic segment spans residues 217 to 230 (PIIGDRILDFLIPF).

It belongs to the peptidase A24 family. Archaeal preflagellin peptidase subfamily.

It localises to the cell membrane. The enzyme catalyses Cleaves the signal peptide of 3 to 12 amino acids from the N-terminal of preflagellin, usually at Arg-Gly-|- or Lys-Gly-|-, to release flagellin.. Its function is as follows. Cleaves the N-terminal leader peptide from preflagellins. This chain is Preflagellin peptidase (flaK), found in Methanococcus maripaludis (strain C6 / ATCC BAA-1332).